Consider the following 260-residue polypeptide: Acetylglutamate kinase (260 aa).

Residues 45–46, Arg-67, and Asn-159 contribute to the substrate site; that span reads GG.

This sequence belongs to the acetylglutamate kinase family. ArgB subfamily.

It localises to the cytoplasm. The enzyme catalyses N-acetyl-L-glutamate + ATP = N-acetyl-L-glutamyl 5-phosphate + ADP. It participates in amino-acid biosynthesis; L-arginine biosynthesis; N(2)-acetyl-L-ornithine from L-glutamate: step 2/4. Functionally, catalyzes the ATP-dependent phosphorylation of N-acetyl-L-glutamate. The protein is Acetylglutamate kinase of Colwellia psychrerythraea (strain 34H / ATCC BAA-681) (Vibrio psychroerythus).